The chain runs to 421 residues: Alpha-1-antitrypsin-related protein (421 aa).

The signal sequence occupies residues 1-21 (MPFSVSWGILLLAGLCCLVPS). Asn-56, Asn-110, Asn-148, and Asn-274 each carry an N-linked (GlcNAc...) asparagine glycan.

The protein belongs to the serpin family. In terms of assembly, interacts with CANX and PDIA3. Glycosylated. As to expression, expressed in the liver, leukocytes and testis. Also detected in brain, colon, uterus, esophagus, spleen, trachea, kidney and lung.

The protein localises to the endoplasmic reticulum. Its function is as follows. Putative serine protease inhibitor. This chain is Alpha-1-antitrypsin-related protein (SERPINA2), found in Homo sapiens (Human).